The chain runs to 362 residues: Heat-inducible transcription repressor HrcA (362 aa).

It belongs to the HrcA family.

In terms of biological role, negative regulator of class I heat shock genes (grpE-dnaK-dnaJ and groELS operons). Prevents heat-shock induction of these operons. This is Heat-inducible transcription repressor HrcA from Rhizobium johnstonii (strain DSM 114642 / LMG 32736 / 3841) (Rhizobium leguminosarum bv. viciae).